Reading from the N-terminus, the 90-residue chain is DNA-binding protein HU-alpha (90 aa).

This sequence belongs to the bacterial histone-like protein family. In terms of assembly, heterodimer of an alpha and a beta chain.

Its function is as follows. Histone-like DNA-binding protein which is capable of wrapping DNA to stabilize it, and thus to prevent its denaturation under extreme environmental conditions. The protein is DNA-binding protein HU-alpha (hupA) of Serratia marcescens.